Reading from the N-terminus, the 481-residue chain is WASH complex subunit 1 (481 aa).

The tract at residues 1–54 (MVRMTQKRYLEGQVYSVPLIQPDLRREEAVHQITDALQYLEMISTDIFTRVSES) is required for WASH complex assembly. Disordered stretches follow at residues 273 to 417 (SVPA…SGGD) and 429 to 481 (RRKG…DWEA). Residues 304–341 (APPPPPPPPPPPPEPTHVPVPPPGTSAAPPPPPPPPPM) are compositionally biased toward pro residues. A VCA region spans residues 359 to 481 (KGAPSEVVQP…AADDEDDWEA (123 aa)). A WH2 domain is found at 371–393 (GRASLLESIRNAGGIGKANLRNV). Over residues 392-407 (NVKERKMEKKKQKEQE) the composition is skewed to basic and acidic residues.

This sequence belongs to the WASH1 family. As to quaternary structure, component of the WASH complex.

Its subcellular location is the early endosome membrane. It is found in the recycling endosome membrane. In terms of biological role, acts as a nucleation-promoting factor at the surface of endosomes, where it recruits and activates the Arp2/3 complex to induce actin polymerization, playing a key role in the fission of tubules that serve as transport intermediates during endosome sorting. The sequence is that of WASH complex subunit 1 from Danio rerio (Zebrafish).